We begin with the raw amino-acid sequence, 150 residues long: Male-specific protein scotti (150 aa).

The segment at 60 to 84 (PPMAVFPARGGPNGGPPRLRKKRSF) is disordered. N-linked (GlcNAc...) asparagine glycosylation occurs at N131.

Belongs to the male-specific scotti family.

Post-meiotically transcribed gene that has a role in late spermiogenesis; required for actin cone progression during spermatid individualization. This chain is Male-specific protein scotti, found in Drosophila yakuba (Fruit fly).